Reading from the N-terminus, the 194-residue chain is Large ribosomal subunit protein bL9c (194 aa).

A chloroplast-targeting transit peptide spans 1–39 (MASSTLSSLSSTPLQHSFAANLKTCSQFPNKSSGFMVFA).

This sequence belongs to the bacterial ribosomal protein bL9 family. As to quaternary structure, part of the 50S ribosomal subunit.

Its subcellular location is the plastid. It is found in the chloroplast. Binds to the 23S rRNA. This chain is Large ribosomal subunit protein bL9c (RPL9), found in Pisum sativum (Garden pea).